Reading from the N-terminus, the 425-residue chain is Cyclin-K (425 aa).

The interval 262 to 425 is disordered; it reads GKQPIPQQPP…RRYLDDDRNL (164 aa). Over residues 366–377 the composition is skewed to low complexity; that stretch reads AEPAAASELDPA. The segment covering 379–399 has biased composition (pro residues); the sequence is GPAPPLPHGAPPPLPHRPPPT.

Belongs to the cyclin family.

It localises to the nucleus. Its function is as follows. Regulatory subunit of cyclin-dependent kinases that mediates activation of target kinases. Plays a role in transcriptional regulation via its role in regulating the phosphorylation of the C-terminal domain (CTD) of the large subunit of RNA polymerase II (POLR2A). The sequence is that of Cyclin-K (ccnk) from Danio rerio (Zebrafish).